The following is a 359-amino-acid chain: Quinolinate synthase (359 aa).

Iminosuccinate contacts are provided by histidine 81 and serine 99. Position 144 (cysteine 144) interacts with [4Fe-4S] cluster. Residues 170–172 and serine 187 contribute to the iminosuccinate site; that span reads YVN. Residue cysteine 229 participates in [4Fe-4S] cluster binding. Iminosuccinate is bound by residues 255 to 257 and threonine 272; that span reads HPE. Cysteine 315 contacts [4Fe-4S] cluster.

Belongs to the quinolinate synthase family. Type 2 subfamily. Requires [4Fe-4S] cluster as cofactor.

It is found in the cytoplasm. The enzyme catalyses iminosuccinate + dihydroxyacetone phosphate = quinolinate + phosphate + 2 H2O + H(+). Its pathway is cofactor biosynthesis; NAD(+) biosynthesis; quinolinate from iminoaspartate: step 1/1. In terms of biological role, catalyzes the condensation of iminoaspartate with dihydroxyacetone phosphate to form quinolinate. This is Quinolinate synthase from Sinorhizobium medicae (strain WSM419) (Ensifer medicae).